Reading from the N-terminus, the 630-residue chain is Probable potassium transport system protein Kup (630 aa).

Helical transmembrane passes span 17–37 (LAIAAIGVVFGDIGTSPLYSL), 51–71 (PSAILGVISLLFWAIILVVGI), 105–125 (ITGLMMALGIFGACMFYGDAV), 144–164 (PQLSHLVLPITIVILIALFWI), 175–195 (LFGPIMVLWFVTIAALGIYHI), 218–238 (VLLAYVVLGSVVLVLTGAEAL), 255–275 (YVLVMPSLVLNYFGQGALLLL), 283–303 (PFFLLAPQWAALPLVVLSTVA), 344–364 (IYVPVVNWLLLFVILCIVIGF), 374–394 (YGIAVTATMVITTILAAVVMV), 402–422 (LLVAMIIGVFLVIDLGFFGAN), and 428–448 (QGGWLPLGIGALLFFLLMTWY).

Belongs to the HAK/KUP transporter (TC 2.A.72) family.

It localises to the cell inner membrane. It carries out the reaction K(+)(in) + H(+)(in) = K(+)(out) + H(+)(out). Transport of potassium into the cell. Likely operates as a K(+):H(+) symporter. The polypeptide is Probable potassium transport system protein Kup (Burkholderia pseudomallei (strain 1710b)).